Here is a 208-residue protein sequence, read N- to C-terminus: Adult-specific cuticular protein ACP-20 (208 aa).

A signal peptide spans Met1–Ala17. Repeat 1 spans residues Gly34–Gly43. Residues Gly34–Gly180 are 2 X 10 AA repeats. The Chitin-binding type R&amp;R domain occupies Pro64–Leu135. Repeat unit 2 spans residues Gly171–Gly180.

In terms of tissue distribution, epidermal regions synthesizing hard cuticle.

Its function is as follows. Cuticular proteins play a significant role in determining the physical properties of cuticles. The polypeptide is Adult-specific cuticular protein ACP-20 (ACP20) (Tenebrio molitor (Yellow mealworm beetle)).